We begin with the raw amino-acid sequence, 161 residues long: Type IV major fimbrial protein FimA (161 aa).

The propeptide at 1–7 (MKSLQKG) is leader sequence. At F8 the chain carries N-methylphenylalanine. A helical membrane pass occupies residues 8–28 (FTLIELMIVVAIIGILAAFAI). C63 and C106 are oxidised to a cystine.

The protein belongs to the N-Me-Phe pilin family. The pili are polar flexible filaments of about 5.4 nanometers diameter and 2.5 micrometers average length; they consist of only a single polypeptide chain arranged in a helical configuration of five subunits per turn in the assembled pilus.

It localises to the fimbrium. It is found in the membrane. Functionally, major component of the type IV fimbriae that plays an essential role in twitching motility, natural transformation, and protease secretion. The sequence is that of Type IV major fimbrial protein FimA (fimA) from Dichelobacter nodosus (Bacteroides nodosus).